The following is a 254-amino-acid chain: Phosphoribosylaminoimidazole-succinocarboxamide synthase (254 aa).

This sequence belongs to the SAICAR synthetase family.

It catalyses the reaction 5-amino-1-(5-phospho-D-ribosyl)imidazole-4-carboxylate + L-aspartate + ATP = (2S)-2-[5-amino-1-(5-phospho-beta-D-ribosyl)imidazole-4-carboxamido]succinate + ADP + phosphate + 2 H(+). It participates in purine metabolism; IMP biosynthesis via de novo pathway; 5-amino-1-(5-phospho-D-ribosyl)imidazole-4-carboxamide from 5-amino-1-(5-phospho-D-ribosyl)imidazole-4-carboxylate: step 1/2. This Gluconobacter oxydans (strain 621H) (Gluconobacter suboxydans) protein is Phosphoribosylaminoimidazole-succinocarboxamide synthase.